The sequence spans 948 residues: Probable disease resistance protein At5g47260 (948 aa).

A coiled-coil region spans residues 20 to 57; the sequence is RKYLYNLERNLEALHKVMQDLNAMRNDLLKRLSKEEEI. The NB-ARC domain occupies 134-432; sequence HRALPPLVIK…CEGILAKEDR (299 aa). 176-183 is a binding site for ATP; the sequence is GRGGVGKT. LRR repeat units lie at residues 498–519, 520–542, 545–567, 569–591, 592–614, 615–636, 640–661, 666–686, and 690–711; these read MIRR…PQCS, ELTT…FFQW, GLVV…VSSL, LLRF…KELK, SLIH…ASLL, NLQV…EDIQ, SLKE…LSIQ, SIRR…LSLN, and SLCE…WRCT.

Belongs to the disease resistance NB-LRR family.

Functionally, potential disease resistance protein. In Arabidopsis thaliana (Mouse-ear cress), this protein is Probable disease resistance protein At5g47260.